The chain runs to 590 residues: KNR4/SMI1 homolog 2 (590 aa).

3 disordered regions span residues 59-97, 216-239, and 407-590; these read SSSHSLIEGGNNGSRTSLSRNGSSTTVGYRPGLRSSNTN, FQHQQQQQQHQKATSSADASETHG, and TPQR…DVAL. A compositionally biased stretch (polar residues) spans 71–85; sequence GSRTSLSRNGSSTTV. A compositionally biased stretch (low complexity) spans 217-226; it reads QHQQQQQQHQ. Residues 430–454 are compositionally biased toward polar residues; that stretch reads PSMSGATANTNKSQNPLINMESSSK. Basic and acidic residues-rich tracts occupy residues 470-481 and 489-515; these read PEEPVKKSEVKS and EPEKETKQKDEIIEEKPEVIETPAKED. The segment covering 516 to 528 has biased composition (acidic residues); that stretch reads DKEEEEEEQEEEK. A compositionally biased stretch (basic residues) spans 554–568; that stretch reads TQKKNQSKKAKKQQQ. Residues 576-590 show a composition bias toward acidic residues; that stretch reads NDVEEVAEDLNDVAL.

Belongs to the KNR4/SMI1 family.

This is KNR4/SMI1 homolog 2 from Debaryomyces hansenii (strain ATCC 36239 / CBS 767 / BCRC 21394 / JCM 1990 / NBRC 0083 / IGC 2968) (Yeast).